Here is a 325-residue protein sequence, read N- to C-terminus: Probable cell division protein WhiA (325 aa).

A DNA-binding region (H-T-H motif) is located at residues 273–306 (SLEELGALADPPLTKDAVAGRIRRLLALADKRAN).

The protein belongs to the WhiA family.

Functionally, involved in cell division and chromosome segregation. In Frankia casuarinae (strain DSM 45818 / CECT 9043 / HFP020203 / CcI3), this protein is Probable cell division protein WhiA.